Reading from the N-terminus, the 117-residue chain is Translation initiation factor 1A (117 aa).

The region spanning 17–92 (IRVPLPDRSK…ERGDIVYRYT (76 aa)) is the S1-like domain.

Belongs to the eIF-1A family.

Functionally, seems to be required for maximal rate of protein biosynthesis. Enhances ribosome dissociation into subunits and stabilizes the binding of the initiator Met-tRNA(I) to 40 S ribosomal subunits. This is Translation initiation factor 1A from Thermococcus kodakarensis (strain ATCC BAA-918 / JCM 12380 / KOD1) (Pyrococcus kodakaraensis (strain KOD1)).